A 691-amino-acid polypeptide reads, in one-letter code: MEEPEDNPYIRDPPLDFEPVDELDAASATRQVETLREAIRFHDYRYYQLADPVISDRAYDQLFERLERLESKFDRSSATSPTQRVGGEPLDELETVEHVAPMRSIESSVEVDDIRDFDTRIQERLAAAGYEGPVRYLCEPKFDGLSVELVYEEGELSRAATRGDGQEGDDVTANVRTIRSVPLTLDGDCPSFLAVRGEIFMPKDAFQEYNRERLERGEEPFSNPRNAAAGTLRQLDPSVTAERPLDCFVFDILDDGGRGFETRMAEHEAVESWGFQVDDHTARVDDIEAAIAFREEMLDGRASLDYEIDGIVIKLDRKDACALLGATARAPRWAYAYKFPARTEETTVRDIVLQVGRTGRLTPVALLDPVEVSGVEVSRATLHNPQQIAELGVGIGDRVTLKRAGDVIPYIEAVVDSEREAHFEFPDRCPVCESPLERDGPLAYCTGGVACPAQLRRAVEHYASRSGLDIEGLGESAVDQLVDAGLVERLPDLYDLSVADVAELDGWGRTSAENLLEELEASTEPPLPAFLSALGIPGVGTTTAADIAREFGTLDAVMDATAEELRAVDGIGPTLGGEIAEFFDSDRNQQVIEQLRKRGVDPEPAETAGDALSGQTFVFTGSLDGLTREEAHELVETSGGTATGSVSGNTDYLVVGDSPGQRKREAANEHGVETLSQSDFESLLESHGIEI.

NAD(+) is bound by residues 56 to 60, 104 to 105, and Glu139; these read DRAYD and SI. Lys141 acts as the N6-AMP-lysine intermediate in catalysis. NAD(+) is bound by residues Arg162, Glu198, Lys314, and Lys338. Zn(2+) is bound by residues Cys429, Cys432, Cys445, and Cys451. The region spanning 607 to 691 is the BRCT domain; it reads TAGDALSGQT…SLLESHGIEI (85 aa).

The protein belongs to the NAD-dependent DNA ligase family. LigA subfamily. Mg(2+) is required as a cofactor. Requires Mn(2+) as cofactor.

It carries out the reaction NAD(+) + (deoxyribonucleotide)n-3'-hydroxyl + 5'-phospho-(deoxyribonucleotide)m = (deoxyribonucleotide)n+m + AMP + beta-nicotinamide D-nucleotide.. Functionally, DNA ligase that catalyzes the formation of phosphodiester linkages between 5'-phosphoryl and 3'-hydroxyl groups in double-stranded DNA using NAD as a coenzyme and as the energy source for the reaction. It is essential for DNA replication and repair of damaged DNA. The polypeptide is DNA ligase (Natronomonas pharaonis (strain ATCC 35678 / DSM 2160 / CIP 103997 / JCM 8858 / NBRC 14720 / NCIMB 2260 / Gabara) (Halobacterium pharaonis)).